We begin with the raw amino-acid sequence, 248 residues long: Probable transcriptional regulatory protein PP_1214 (248 aa).

The segment at 1 to 21 (MAGHSKWANIKHRKERQDAKR) is disordered.

This sequence belongs to the TACO1 family.

The protein resides in the cytoplasm. This is Probable transcriptional regulatory protein PP_1214 from Pseudomonas putida (strain ATCC 47054 / DSM 6125 / CFBP 8728 / NCIMB 11950 / KT2440).